The chain runs to 460 residues: UDP-glucuronate 4-epimerase 6 (460 aa).

Transmembrane regions (helical) follow at residues 41–61 (ATLL…PPLS) and 111–131 (GLSV…SLAL). 113–144 (SVLVTGAAGFVGSHCSLALRKRGDGVLGFDNF) contributes to the NAD(+) binding site. Tyr263 functions as the Proton acceptor in the catalytic mechanism.

It belongs to the NAD(P)-dependent epimerase/dehydratase family. As to quaternary structure, homodimer. In roots, leaf veins, siliques, flowers, pollen and stems.

It is found in the golgi apparatus. The protein resides in the golgi stack membrane. It catalyses the reaction UDP-alpha-D-glucuronate = UDP-alpha-D-galacturonate. Functionally, involved in the synthesis of the negatively charged monosaccharide that forms the backbone of pectic cell wall components. This chain is UDP-glucuronate 4-epimerase 6 (GAE6), found in Arabidopsis thaliana (Mouse-ear cress).